The chain runs to 252 residues: Probable NADP-dependent dehydrogenase HI_1430 (252 aa).

Position 7-31 (7-31 (LVTGATAGFGLAICKKLIEAGYKVI)) interacts with NADP(+). S137 provides a ligand contact to substrate. Y150 (proton acceptor) is an active-site residue.

Belongs to the short-chain dehydrogenases/reductases (SDR) family.

The sequence is that of Probable NADP-dependent dehydrogenase HI_1430 from Haemophilus influenzae (strain ATCC 51907 / DSM 11121 / KW20 / Rd).